Here is a 434-residue protein sequence, read N- to C-terminus: Phosphomethylpyrimidine synthase (434 aa).

Residues asparagine 74, methionine 103, tyrosine 132, histidine 171, 193–195, 234–237, and glutamate 273 each bind substrate; these read SRG and DGIR. Histidine 277 serves as a coordination point for Zn(2+). Residue tyrosine 300 participates in substrate binding. Histidine 341 is a binding site for Zn(2+). 3 residues coordinate [4Fe-4S] cluster: cysteine 417, cysteine 420, and cysteine 424.

The protein belongs to the ThiC family. Homodimer. Requires [4Fe-4S] cluster as cofactor.

The enzyme catalyses 5-amino-1-(5-phospho-beta-D-ribosyl)imidazole + S-adenosyl-L-methionine = 4-amino-2-methyl-5-(phosphooxymethyl)pyrimidine + CO + 5'-deoxyadenosine + formate + L-methionine + 3 H(+). It participates in cofactor biosynthesis; thiamine diphosphate biosynthesis. In terms of biological role, catalyzes the synthesis of the hydroxymethylpyrimidine phosphate (HMP-P) moiety of thiamine from aminoimidazole ribotide (AIR) in a radical S-adenosyl-L-methionine (SAM)-dependent reaction. This chain is Phosphomethylpyrimidine synthase, found in Desulfotalea psychrophila (strain LSv54 / DSM 12343).